Here is a 207-residue protein sequence, read N- to C-terminus: Large ribosomal subunit protein bL25 (207 aa).

Residues 171–207 are disordered; that stretch reads EEETVVTVSAPRAEEEPTTTEAPEPEAVHGNDEEPVE. A compositionally biased stretch (basic and acidic residues) spans 196-207; sequence EAVHGNDEEPVE.

The protein belongs to the bacterial ribosomal protein bL25 family. CTC subfamily. Part of the 50S ribosomal subunit; part of the 5S rRNA/L5/L18/L25 subcomplex. Contacts the 5S rRNA. Binds to the 5S rRNA independently of L5 and L18.

This is one of the proteins that binds to the 5S RNA in the ribosome where it forms part of the central protuberance. The protein is Large ribosomal subunit protein bL25 of Listeria innocua serovar 6a (strain ATCC BAA-680 / CLIP 11262).